We begin with the raw amino-acid sequence, 79 residues long: Putative antitoxin MM_2475 (79 aa).

The protein belongs to the UPF0330 family.

Possibly the antitoxin component of a type II toxin-antitoxin (TA) system. This Methanosarcina mazei (strain ATCC BAA-159 / DSM 3647 / Goe1 / Go1 / JCM 11833 / OCM 88) (Methanosarcina frisia) protein is Putative antitoxin MM_2475.